The following is a 257-amino-acid chain: UPF0246 protein CLH_2088 (257 aa).

The protein belongs to the UPF0246 family.

In Clostridium botulinum (strain Alaska E43 / Type E3), this protein is UPF0246 protein CLH_2088.